The following is a 56-amino-acid chain: Small ribosomal subunit protein uS14A (56 aa).

Positions 21 and 24 each coordinate Zn(2+). Phosphoserine is present on S25. Zn(2+)-binding residues include C39 and C42.

Belongs to the universal ribosomal protein uS14 family. In terms of assembly, component of the small ribosomal subunit (SSU). Mature yeast ribosomes consist of a small (40S) and a large (60S) subunit. The 40S small subunit contains 1 molecule of ribosomal RNA (18S rRNA) and 33 different proteins (encoded by 57 genes). The large 60S subunit contains 3 rRNA molecules (25S, 5.8S and 5S rRNA) and 46 different proteins (encoded by 81 genes). Requires Zn(2+) as cofactor.

The protein resides in the cytoplasm. Component of the ribosome, a large ribonucleoprotein complex responsible for the synthesis of proteins in the cell. The small ribosomal subunit (SSU) binds messenger RNAs (mRNAs) and translates the encoded message by selecting cognate aminoacyl-transfer RNA (tRNA) molecules. The large subunit (LSU) contains the ribosomal catalytic site termed the peptidyl transferase center (PTC), which catalyzes the formation of peptide bonds, thereby polymerizing the amino acids delivered by tRNAs into a polypeptide chain. The nascent polypeptides leave the ribosome through a tunnel in the LSU and interact with protein factors that function in enzymatic processing, targeting, and the membrane insertion of nascent chains at the exit of the ribosomal tunnel. This chain is Small ribosomal subunit protein uS14A, found in Saccharomyces cerevisiae (strain ATCC 204508 / S288c) (Baker's yeast).